Consider the following 164-residue polypeptide: Thiol peroxidase (164 aa).

The region spanning 16-162 is the Thioredoxin domain; it reads LQVGDIAKDF…YEAAINAAKI (147 aa). Cys58 (cysteine sulfenic acid (-SOH) intermediate) is an active-site residue. The cysteines at positions 58 and 92 are disulfide-linked.

The protein belongs to the peroxiredoxin family. Tpx subfamily. Homodimer.

The catalysed reaction is a hydroperoxide + [thioredoxin]-dithiol = an alcohol + [thioredoxin]-disulfide + H2O. Thiol-specific peroxidase that catalyzes the reduction of hydrogen peroxide and organic hydroperoxides to water and alcohols, respectively. Plays a role in cell protection against oxidative stress by detoxifying peroxides. This chain is Thiol peroxidase, found in Streptococcus agalactiae serotype V (strain ATCC BAA-611 / 2603 V/R).